The chain runs to 384 residues: 1-deoxy-D-xylulose 5-phosphate reductoisomerase (384 aa).

Positions 10, 11, 12, 13, 38, and 120 each coordinate NADPH. Lys-121 is a binding site for 1-deoxy-D-xylulose 5-phosphate. NADPH is bound at residue Glu-122. Position 146 (Asp-146) interacts with Mn(2+). Ser-147, Glu-148, Ser-172, and His-195 together coordinate 1-deoxy-D-xylulose 5-phosphate. Glu-148 serves as a coordination point for Mn(2+). Gly-201 contributes to the NADPH binding site. 1-deoxy-D-xylulose 5-phosphate contacts are provided by Ser-208, Asn-213, Lys-214, and Glu-217. Glu-217 serves as a coordination point for Mn(2+).

It belongs to the DXR family. Mg(2+) serves as cofactor. It depends on Mn(2+) as a cofactor.

It carries out the reaction 2-C-methyl-D-erythritol 4-phosphate + NADP(+) = 1-deoxy-D-xylulose 5-phosphate + NADPH + H(+). The protein operates within isoprenoid biosynthesis; isopentenyl diphosphate biosynthesis via DXP pathway; isopentenyl diphosphate from 1-deoxy-D-xylulose 5-phosphate: step 1/6. Catalyzes the NADPH-dependent rearrangement and reduction of 1-deoxy-D-xylulose-5-phosphate (DXP) to 2-C-methyl-D-erythritol 4-phosphate (MEP). In Protochlamydia amoebophila (strain UWE25), this protein is 1-deoxy-D-xylulose 5-phosphate reductoisomerase.